Reading from the N-terminus, the 742-residue chain is Two-component response regulator-like PRR37 (742 aa).

Residues 63–181 (KVLLVDSDDS…ELKNLWQHVW (119 aa)) form the Response regulatory domain. The segment covering 186 to 195 (SSSGSGSESG) has biased composition (low complexity). 7 disordered regions span residues 186-249 (SSSG…SWTK), 290-346 (PCTS…PLQN), 377-402 (QQAA…NRDN), 478-517 (MKSN…NKER), 533-568 (FHPA…GEVQ), 590-671 (NGGS…GNDM), and 697-742 (NFGK…AADR). Polar residues predominate over residues 236-248 (DNGSGTQAQSSWT). The span at 299-313 (KQKETNDDFKGKDLE) shows a compositional bias: basic and acidic residues. Over residues 318-330 (RNLNTAYQSSPNE) the composition is skewed to polar residues. The span at 331 to 341 (RSIKPTDRRNE) shows a compositional bias: basic and acidic residues. Residues 490-502 (GSNGSSNNNDMGS) show a composition bias toward low complexity. Positions 503–512 (TTKNVVTKPS) are enriched in polar residues. The segment covering 618–634 (NGSNSGSNNGSNGQNGS) has biased composition (low complexity). Residues 656–667 (GPGGGNGSGSGS) show a composition bias toward gly residues. One can recognise a CCT domain in the interval 682 to 724 (RVAAVIKFRQKRKERNFGKKVRYQSRKRLAEQRPRVRGQFVRQ). The span at 697–708 (NFGKKVRYQSRK) shows a compositional bias: basic residues. Residues 719-731 (GQFVRQAVQDQQQ) are compositionally biased toward low complexity.

It belongs to the ARR-like family.

The protein localises to the nucleus. Probable transcription factor involved in the regulation of flowering time under long day (LD) conditions. Functions as a repressor of flowering. Controls flowering time by negatively regulating the expression of HD3A. Acts downstream of the phytochrome B to repress the expression of EHD1, an activator of the flowering promoter genes HD3A and RFT1. Controls photoperiodic flowering response. Seems to be one of the component of the circadian clock. Expression of several members of the ARR-like family is controlled by circadian rhythm. The particular coordinated sequential expression of PRR73, PRR37, PRR95, PRR59 and PPR1 result to circadian waves that may be at the basis of the endogenous circadian clock. This chain is Two-component response regulator-like PRR37, found in Oryza sativa subsp. japonica (Rice).